Consider the following 345-residue polypeptide: Sesquiterpene synthase GALMADRAFT_104215 (345 aa).

Mg(2+) is bound by residues aspartate 91, asparagine 226, serine 230, and glutamate 234. The short motif at 91 to 95 is the DDXXD motif element; the sequence is DEFTD. Positions 316 and 317 each coordinate (2E,6E)-farnesyl diphosphate.

The protein belongs to the terpene synthase family. It depends on Mg(2+) as a cofactor.

It carries out the reaction (2E,6E)-farnesyl diphosphate = beta-gurjunene + diphosphate. In terms of biological role, terpene cyclase that catalyzes the cyclization of farnesyl diphosphate (FPP) to beta-gurjunene. In Galerina marginata (strain CBS 339.88), this protein is Sesquiterpene synthase GALMADRAFT_104215.